A 221-amino-acid chain; its full sequence is Sigma non-opioid intracellular receptor 1 (221 aa).

Over 1-4 (MALW) the chain is Lumenal. A helical membrane pass occupies residues 5 to 27 (RGLRAVLAVAGLAVAVQLLRGWL). The Cytoplasmic segment spans residues 28-221 (GSKSYVFNRE…STHLSELGFF (194 aa)). The interval 96–103 (SLTEYVLL) is important for ligand-binding. The tract at residues 174–221 (FIPSTLGFALADTIFSTQDFLTLFYTVKVYGKALLLETSTHLSELGFF) is C-terminal hydrophobic region.

Belongs to the ERG2 family. Homotrimer.

The protein localises to the nucleus inner membrane. Its subcellular location is the nucleus outer membrane. It is found in the nucleus envelope. It localises to the cytoplasmic vesicle. The protein resides in the endoplasmic reticulum membrane. The protein localises to the membrane. May function in lipid transport from the endoplasmic reticulum and be involved in a wide array of cellular functions probably through regulation of the biogenesis of lipid microdomains at the plasma membrane. May regulate calcium efflux at the endoplasmic reticulum. The chain is Sigma non-opioid intracellular receptor 1 (sigmar1) from Xenopus tropicalis (Western clawed frog).